Reading from the N-terminus, the 449-residue chain is Biotin carboxylase (449 aa).

In terms of domain architecture, Biotin carboxylation spans 4–448; the sequence is MIEKVLIANR…NIHYLEKMLG (445 aa). ATP contacts are provided by residues Lys-119, Lys-162, 168–169, 204–207, His-212, and His-239; these read GG and EKYL. The region spanning 123–320 is the ATP-grasp domain; the sequence is IAAMKAAGVP…IVKEQILIAA (198 aa). Lys-241 lines the hydrogencarbonate pocket. ATP is bound by residues Glu-279 and Glu-291. Mg(2+)-binding residues include Glu-279, Glu-291, and Asn-293. 3 residues coordinate Mn(2+): Glu-279, Glu-291, and Asn-293. Arg-295, Val-298, and Arg-341 together coordinate hydrogencarbonate. Arg-295 is a catalytic residue. Residue Arg-341 coordinates biotin.

As to quaternary structure, acetyl-CoA carboxylase is a heterohexamer of biotin carboxyl carrier protein, biotin carboxylase and the two subunits of carboxyl transferase in a 2:2 complex. Mg(2+) serves as cofactor. The cofactor is Mn(2+).

The catalysed reaction is N(6)-biotinyl-L-lysyl-[protein] + hydrogencarbonate + ATP = N(6)-carboxybiotinyl-L-lysyl-[protein] + ADP + phosphate + H(+). It participates in lipid metabolism; malonyl-CoA biosynthesis; malonyl-CoA from acetyl-CoA: step 1/1. In terms of biological role, this protein is a component of the acetyl coenzyme A carboxylase complex; first, biotin carboxylase catalyzes the carboxylation of the carrier protein and then the transcarboxylase transfers the carboxyl group to form malonyl-CoA. The sequence is that of Biotin carboxylase (accC) from Allochromatium vinosum (strain ATCC 17899 / DSM 180 / NBRC 103801 / NCIMB 10441 / D) (Chromatium vinosum).